The sequence spans 636 residues: Biosynthetic arginine decarboxylase (636 aa).

An N6-(pyridoxal phosphate)lysine modification is found at Lys101. 286–296 (FDVGGGLAVDY) is a binding site for substrate.

Belongs to the Orn/Lys/Arg decarboxylase class-II family. SpeA subfamily. Mg(2+) is required as a cofactor. Requires pyridoxal 5'-phosphate as cofactor.

The catalysed reaction is L-arginine + H(+) = agmatine + CO2. It participates in amine and polyamine biosynthesis; agmatine biosynthesis; agmatine from L-arginine: step 1/1. Its function is as follows. Catalyzes the biosynthesis of agmatine from arginine. The sequence is that of Biosynthetic arginine decarboxylase from Shewanella denitrificans (strain OS217 / ATCC BAA-1090 / DSM 15013).